The sequence spans 323 residues: Beta-ketoacyl-[acyl-carrier-protein] synthase III (323 aa).

Catalysis depends on residues Cys-114 and His-250. The interval 251–255 is ACP-binding; sequence QANIR. The active site involves Asn-280.

This sequence belongs to the thiolase-like superfamily. FabH family. In terms of assembly, homodimer.

The protein localises to the cytoplasm. The enzyme catalyses malonyl-[ACP] + acetyl-CoA + H(+) = 3-oxobutanoyl-[ACP] + CO2 + CoA. Its pathway is lipid metabolism; fatty acid biosynthesis. Catalyzes the condensation reaction of fatty acid synthesis by the addition to an acyl acceptor of two carbons from malonyl-ACP. Catalyzes the first condensation reaction which initiates fatty acid synthesis and may therefore play a role in governing the total rate of fatty acid production. Possesses both acetoacetyl-ACP synthase and acetyl transacylase activities. Its substrate specificity determines the biosynthesis of branched-chain and/or straight-chain of fatty acids. The polypeptide is Beta-ketoacyl-[acyl-carrier-protein] synthase III (Alkalilimnicola ehrlichii (strain ATCC BAA-1101 / DSM 17681 / MLHE-1)).